Reading from the N-terminus, the 1018-residue chain is Transmembrane protein 132A (1018 aa).

Positions 1 to 32 (MTERKAAAPRGPYGAWFCLLVALALEVVRVSS) are cleaved as a signal peptide. At 33–846 (NHDTLDPIYL…VTDLELGMYA (814 aa)) the chain is on the extracellular side. N-linked (GlcNAc...) asparagine glycosylation occurs at asparagine 276. The interval 606–911 (IEVRSPLSDA…QLDRCSSSGP (306 aa)) is binds to HSPA5/GRP78. The confers cellular localization similar to full-length form stretch occupies residues 666 to 1018 (LPAPKQEVAL…NYMERIRGSS (353 aa)). Residues 807–818 (ERAEEEAGKEEN) are compositionally biased toward basic and acidic residues. A disordered region spans residues 807–833 (ERAEEEAGKEENEAKEEEEDEEEMVPA). Residues 819–830 (EAKEEEEDEEEM) are compositionally biased toward acidic residues. A helical transmembrane segment spans residues 847 to 867 (LLGIFCLAILIFLVNGVVFVL). At 868 to 1018 (RYQRKEPPDS…NYMERIRGSS (151 aa)) the chain is on the cytoplasmic side. The tract at residues 900-956 (SRQLDRCSSSGPPKGEGGCPCESGAGGDASTVAPSASESPAGSSSTLARKEAGGRRK) is disordered. Low complexity-rich tracts occupy residues 906 to 922 (CSSS…PCES) and 932 to 944 (APSA…GSSS).

It belongs to the TMEM132 family. In terms of assembly, interacts with HSPA5/GRP78.

The protein localises to the golgi apparatus membrane. It is found in the endoplasmic reticulum membrane. Its function is as follows. May play a role in embryonic and postnatal development of the brain. Increased resistance to cell death induced by serum starvation in cultured cells. Regulates cAMP-induced GFAP gene expression via STAT3 phosphorylation. The polypeptide is Transmembrane protein 132A (Tmem132a) (Mus musculus (Mouse)).